Reading from the N-terminus, the 149-residue chain is Large ribosomal subunit protein uL13 (149 aa).

The protein belongs to the universal ribosomal protein uL13 family. Part of the 50S ribosomal subunit.

Functionally, this protein is one of the early assembly proteins of the 50S ribosomal subunit, although it is not seen to bind rRNA by itself. It is important during the early stages of 50S assembly. The polypeptide is Large ribosomal subunit protein uL13 (Chlorobium limicola (strain DSM 245 / NBRC 103803 / 6330)).